Here is a 315-residue protein sequence, read N- to C-terminus: 4-diphosphocytidyl-2-C-methyl-D-erythritol kinase (315 aa).

The active site involves lysine 10. 107–117 serves as a coordination point for ATP; it reads PVAGGMAGGSA. Aspartate 148 is an active-site residue. The disordered stretch occupies residues 292-315; the sequence is HPATSPVPGPAKNRGAHIVSIESE.

The protein belongs to the GHMP kinase family. IspE subfamily.

The catalysed reaction is 4-CDP-2-C-methyl-D-erythritol + ATP = 4-CDP-2-C-methyl-D-erythritol 2-phosphate + ADP + H(+). The protein operates within isoprenoid biosynthesis; isopentenyl diphosphate biosynthesis via DXP pathway; isopentenyl diphosphate from 1-deoxy-D-xylulose 5-phosphate: step 3/6. In terms of biological role, catalyzes the phosphorylation of the position 2 hydroxy group of 4-diphosphocytidyl-2C-methyl-D-erythritol. This chain is 4-diphosphocytidyl-2-C-methyl-D-erythritol kinase, found in Corynebacterium efficiens (strain DSM 44549 / YS-314 / AJ 12310 / JCM 11189 / NBRC 100395).